A 196-amino-acid chain; its full sequence is Corticoliberin (196 aa).

The first 24 residues, 1–24 (MRLPLLLSAGVLLVVSLPCPPCRA), serve as a signal peptide directing secretion. A propeptide spanning residues 25-153 (LLSRGPIPGA…RQETPERERR (129 aa)) is cleaved from the precursor. A disordered region spans residues 122–158 (PRRQLDSPAGPAERGEENALGSRQETPERERRSEEPP). The segment covering 146 to 156 (ETPERERRSEE) has biased composition (basic and acidic residues). Isoleucine 194 is subject to Isoleucine amide.

Belongs to the sauvagine/corticotropin-releasing factor/urotensin I family. In terms of assembly, interacts (via C-terminus) with CRFR1 (via N-terminal extracellular domain). Produced by the hypothalamus.

It is found in the secreted. Its function is as follows. Hormone regulating the release of corticotropin from pituitary gland. Induces NLRP6 in intestinal epithelial cells, hence may influence gut microbiota profile. This Canis lupus familiaris (Dog) protein is Corticoliberin (CRH).